The chain runs to 86 residues: Putative membrane protein insertion efficiency factor (86 aa).

A disordered region spans residues 66–86; that stretch reads AGGHDPVPPVPPQRYPSAQEH.

This sequence belongs to the UPF0161 family.

It localises to the cell inner membrane. In terms of biological role, could be involved in insertion of integral membrane proteins into the membrane. This is Putative membrane protein insertion efficiency factor from Nitratidesulfovibrio vulgaris (strain ATCC 29579 / DSM 644 / CCUG 34227 / NCIMB 8303 / VKM B-1760 / Hildenborough) (Desulfovibrio vulgaris).